The sequence spans 591 residues: L-fucose isomerase (591 aa).

Residues Glu-337 and Asp-361 each act as proton acceptor in the active site. Residues Glu-337, Asp-361, and His-528 each contribute to the Mn(2+) site.

Belongs to the L-fucose isomerase family. As to quaternary structure, homohexamer. The cofactor is Mn(2+).

It is found in the cytoplasm. It catalyses the reaction L-fucose = L-fuculose. Its pathway is carbohydrate degradation; L-fucose degradation; L-lactaldehyde and glycerone phosphate from L-fucose: step 1/3. Converts the aldose L-fucose into the corresponding ketose L-fuculose. The sequence is that of L-fucose isomerase from Salmonella schwarzengrund (strain CVM19633).